The following is a 367-amino-acid chain: Heme A synthase 2 (367 aa).

5 helical membrane passes run M28–A48, M114–G134, W143–A163, V180–L200, and M221–G241. Residue H284 participates in heme binding. 3 helical membrane-spanning segments follow: residues L286–D306, A314–V334, and I340–F360. H344 is a binding site for heme.

It belongs to the COX15/CtaA family. Type 2 subfamily. Interacts with CtaB. The cofactor is heme b.

The protein localises to the cell membrane. It carries out the reaction Fe(II)-heme o + 2 A + H2O = Fe(II)-heme a + 2 AH2. It participates in porphyrin-containing compound metabolism; heme A biosynthesis; heme A from heme O: step 1/1. Catalyzes the conversion of heme O to heme A by two successive hydroxylations of the methyl group at C8. The first hydroxylation forms heme I, the second hydroxylation results in an unstable dihydroxymethyl group, which spontaneously dehydrates, resulting in the formyl group of heme A. This chain is Heme A synthase 2, found in Acidiphilium cryptum (strain JF-5).